The sequence spans 59 residues: Large ribosomal subunit protein uL30 (59 aa).

The protein belongs to the universal ribosomal protein uL30 family. Part of the 50S ribosomal subunit.

In Lactococcus lactis subsp. lactis (strain IL1403) (Streptococcus lactis), this protein is Large ribosomal subunit protein uL30.